A 284-amino-acid chain; its full sequence is Probable protein phosphatase 2C 41 (284 aa).

Residues 35–282 form the PPM-type phosphatase domain; the sequence is SYGFYLVRGM…DDISCVVVRF (248 aa). Residues D72, G73, D234, and D273 each contribute to the Mn(2+) site.

The protein belongs to the PP2C family. The cofactor is Mg(2+). It depends on Mn(2+) as a cofactor.

The enzyme catalyses O-phospho-L-seryl-[protein] + H2O = L-seryl-[protein] + phosphate. It catalyses the reaction O-phospho-L-threonyl-[protein] + H2O = L-threonyl-[protein] + phosphate. The polypeptide is Probable protein phosphatase 2C 41 (Oryza sativa subsp. japonica (Rice)).